The sequence spans 923 residues: Protein dct-6 (923 aa).

The stretch at 312–347 (DMNDQIEQMISLLVDELSELEKLEQLCKEVERTGNQ) forms a coiled coil.

May have a role in tumor suppression. The chain is Protein dct-6 (dct-6) from Caenorhabditis elegans.